The chain runs to 181 residues: Akirin-2 (181 aa).

The segment at 18–48 is disordered; that stretch reads SPAASPKRRRCAPLSPSGPSPQKYLRLEPSP. Residues 23-28 carry the Nuclear localization signal motif; it reads PKRRRC. The short motif at 178–181 is the SYVS motif element; the sequence is SYVS.

It belongs to the akirin family. In terms of assembly, homodimer. Interacts with actl6a/baf53a. Interacts with gmnn.

Its subcellular location is the nucleus. Its function is as follows. Molecular adapter that acts as a bridge between a variety of multiprotein complexes, and which is involved in embryonic development, immunity, myogenesis and brain development. Plays a key role in nuclear protein degradation by promoting import of proteasomes into the nucleus: acts by bridging fully assembled 20S proteasomes with nuclear import receptor ipo9. Involved in both neural precursor maintenance and terminal neural differentiation: bridges gmnn and actl6a/baf53a in neural progenitor cells, antagonizing the activity of gmnn, thereby suppressing sox2 expression. Also required for proper activation of neurod1 and neuronal differentiation. Involved in myogenesis: required for skeletal muscle formation and skeletal development, possibly by regulating expression of muscle differentiation factors. This Xenopus laevis (African clawed frog) protein is Akirin-2.